The following is a 357-amino-acid chain: Protein RecA (357 aa).

Residue 71-78 (GPESSGKT) coordinates ATP.

Belongs to the RecA family.

Its subcellular location is the cytoplasm. Can catalyze the hydrolysis of ATP in the presence of single-stranded DNA, the ATP-dependent uptake of single-stranded DNA by duplex DNA, and the ATP-dependent hybridization of homologous single-stranded DNAs. It interacts with LexA causing its activation and leading to its autocatalytic cleavage. In Ehrlichia canis (strain Jake), this protein is Protein RecA.